The following is a 486-amino-acid chain: Glutamyl-tRNA(Gln) amidotransferase subunit A (486 aa).

Catalysis depends on charge relay system residues K74 and S149. Residue S173 is the Acyl-ester intermediate of the active site.

The protein belongs to the amidase family. GatA subfamily. Heterotrimer of A, B and C subunits.

The catalysed reaction is L-glutamyl-tRNA(Gln) + L-glutamine + ATP + H2O = L-glutaminyl-tRNA(Gln) + L-glutamate + ADP + phosphate + H(+). Functionally, allows the formation of correctly charged Gln-tRNA(Gln) through the transamidation of misacylated Glu-tRNA(Gln) in organisms which lack glutaminyl-tRNA synthetase. The reaction takes place in the presence of glutamine and ATP through an activated gamma-phospho-Glu-tRNA(Gln). The sequence is that of Glutamyl-tRNA(Gln) amidotransferase subunit A from Prochlorococcus marinus (strain MIT 9303).